The sequence spans 176 residues: NADH-quinone oxidoreductase subunit I 1 (176 aa).

4Fe-4S ferredoxin-type domains lie at I45–T77 and R87–D116. The [4Fe-4S] cluster site is built by C57, C60, C63, C67, C96, C99, C102, and C106.

The protein belongs to the complex I 23 kDa subunit family. NDH-1 is composed of 14 different subunits. Subunits NuoA, H, J, K, L, M, N constitute the membrane sector of the complex. [4Fe-4S] cluster is required as a cofactor.

Its subcellular location is the cell inner membrane. It catalyses the reaction a quinone + NADH + 5 H(+)(in) = a quinol + NAD(+) + 4 H(+)(out). NDH-1 shuttles electrons from NADH, via FMN and iron-sulfur (Fe-S) centers, to quinones in the respiratory chain. The immediate electron acceptor for the enzyme in this species is believed to be ubiquinone. Couples the redox reaction to proton translocation (for every two electrons transferred, four hydrogen ions are translocated across the cytoplasmic membrane), and thus conserves the redox energy in a proton gradient. The chain is NADH-quinone oxidoreductase subunit I 1 from Geobacter metallireducens (strain ATCC 53774 / DSM 7210 / GS-15).